A 454-amino-acid polypeptide reads, in one-letter code: Chromosomal replication initiator protein DnaA (454 aa).

Positions 1–77 (MASLNENQKF…GFEVFGRMID (77 aa)) are domain I, interacts with DnaA modulators. Residues 77–115 (DYELYANDELTDIELRRLNNQSPVDEPLSVAKPTSPLVS) form a domain II region. The segment at 116-332 (GLNEKYNFEN…GALNRVEFVA (217 aa)) is domain III, AAA+ region. Residues Gly160, Gly162, Lys163, and Thr164 each contribute to the ATP site. The segment at 333-454 (RANGISIVDI…KDIDSIKRKF (122 aa)) is domain IV, binds dsDNA.

The protein belongs to the DnaA family. In terms of assembly, oligomerizes as a right-handed, spiral filament on DNA at oriC.

Its subcellular location is the cytoplasm. In terms of biological role, plays an essential role in the initiation and regulation of chromosomal replication. ATP-DnaA binds to the origin of replication (oriC) to initiate formation of the DNA replication initiation complex once per cell cycle. Binds the DnaA box (a 9 base pair repeat at the origin) and separates the double-stranded (ds)DNA. Forms a right-handed helical filament on oriC DNA; dsDNA binds to the exterior of the filament while single-stranded (ss)DNA is stabiized in the filament's interior. The ATP-DnaA-oriC complex binds and stabilizes one strand of the AT-rich DNA unwinding element (DUE), permitting loading of DNA polymerase. After initiation quickly degrades to an ADP-DnaA complex that is not apt for DNA replication. Binds acidic phospholipids. The protein is Chromosomal replication initiator protein DnaA of Lactococcus lactis subsp. cremoris (strain MG1363).